Here is a 134-residue protein sequence, read N- to C-terminus: Replication enhancer protein (134 aa).

It belongs to the geminiviridae replication enhancer protein family. Homooligomer. Interacts with the replication-associated protein (REP). Interacts with host proliferating cell nuclear antigen (PCNA). Interacts with host retinoblastoma-related protein 1 (RBR1), and may thereby deregulate the host cell cycle. Oligomerization and interaction with PCNA are necessary for optimal replication enhancement.

Increases viral DNA accumulation. Enhances infectivity and symptom expression. This is Replication enhancer protein from Cynanchum acutum (Tomato).